Here is a 588-residue protein sequence, read N- to C-terminus: Adenine deaminase (588 aa).

It belongs to the metallo-dependent hydrolases superfamily. Adenine deaminase family. Homodimer. Requires Mn(2+) as cofactor.

It catalyses the reaction adenine + H2O + H(+) = hypoxanthine + NH4(+). The protein is Adenine deaminase of Shigella flexneri.